The following is a 114-amino-acid chain: Cuticle protein AMP5 (114 aa).

Q1 is subject to Pyrrolidone carboxylic acid. The Chitin-binding type R&amp;R domain occupies 18-83; sequence AGNYFYEFET…VDSPLIPVAP (66 aa).

In terms of tissue distribution, arthrodial membrane.

This Homarus americanus (American lobster) protein is Cuticle protein AMP5.